Reading from the N-terminus, the 113-residue chain is uncharacterized protein (113 aa).

2 helical membrane-spanning segments follow: residues 25–45 and 49–69; these read FGFC…CFII and FEVE…LSVW.

It is found in the host membrane. This is an uncharacterized protein from Spiroplasma citri (SpV1).